A 41-amino-acid polypeptide reads, in one-letter code: Large ribosomal subunit protein bL36 (41 aa).

The protein belongs to the bacterial ribosomal protein bL36 family.

In Sinorhizobium medicae (strain WSM419) (Ensifer medicae), this protein is Large ribosomal subunit protein bL36.